The primary structure comprises 728 residues: Catalase-peroxidase (728 aa).

The tryptophyl-tyrosyl-methioninium (Trp-Tyr) (with M-244) cross-link spans 91–218 (WHSAGTYRTA…LAAVQMGLIY (128 aa)). H92 functions as the Proton acceptor in the catalytic mechanism. Positions 218 to 244 (YVNPEGPDGTPDPVAAAHDIRETFARM) form a cross-link, tryptophyl-tyrosyl-methioninium (Tyr-Met) (with W-91). H259 provides a ligand contact to heme b.

It belongs to the peroxidase family. Peroxidase/catalase subfamily. As to quaternary structure, homodimer or homotetramer. Heme b is required as a cofactor. Post-translationally, formation of the three residue Trp-Tyr-Met cross-link is important for the catalase, but not the peroxidase activity of the enzyme.

It carries out the reaction H2O2 + AH2 = A + 2 H2O. The catalysed reaction is 2 H2O2 = O2 + 2 H2O. Functionally, bifunctional enzyme with both catalase and broad-spectrum peroxidase activity. The sequence is that of Catalase-peroxidase from Burkholderia lata (strain ATCC 17760 / DSM 23089 / LMG 22485 / NCIMB 9086 / R18194 / 383).